The primary structure comprises 25 residues: Xenoposin precursor fragment BM2 (25 aa).

In terms of tissue distribution, expressed by the skin glands.

The protein resides in the secreted. Its function is as follows. Antimicrobial peptide. The protein is Xenoposin precursor fragment BM2 of Xenopus boumbaensis (Mawa clawed frog).